A 1019-amino-acid polypeptide reads, in one-letter code: Photoactivated adenylate cyclase subunit alpha-like protein ST- (1019 aa).

A BLUF 1 domain is found at Leu-55–Lys-148. Residues Val-204 to Thr-332 enclose the Guanylate cyclase 1 domain. Residues Leu-467–Thr-559 enclose the BLUF 2 domain. The 130-residue stretch at Val-615–Glu-744 folds into the Guanylate cyclase 2 domain. Disordered regions lie at residues Glu-801 to His-846, Gln-887 to Ala-923, and Glu-963 to Thr-993. Over residues Arg-821–His-834 the composition is skewed to basic residues.

Belongs to the adenylyl cyclase class-4/guanylyl cyclase family. Heterotetramer of two alpha and two beta subunits.

The protein localises to the cell projection. Its subcellular location is the cilium. It is found in the flagellum. This Euglena gracilis protein is Photoactivated adenylate cyclase subunit alpha-like protein ST-.